The sequence spans 71 residues: Large ribosomal subunit protein uL29 (71 aa).

The interval 1–20 (MKARELQELRQGSSPQDLQE) is disordered.

It belongs to the universal ribosomal protein uL29 family.

This is Large ribosomal subunit protein uL29 from Clostridium kluyveri (strain ATCC 8527 / DSM 555 / NBRC 12016 / NCIMB 10680 / K1).